The chain runs to 219 residues: Translation initiation factor IF-3 (219 aa).

It belongs to the IF-3 family. In terms of assembly, monomer.

The protein resides in the cytoplasm. In terms of biological role, IF-3 binds to the 30S ribosomal subunit and shifts the equilibrium between 70S ribosomes and their 50S and 30S subunits in favor of the free subunits, thus enhancing the availability of 30S subunits on which protein synthesis initiation begins. This is Translation initiation factor IF-3 from Prochlorococcus marinus (strain MIT 9313).